Consider the following 551-residue polypeptide: Arginine--tRNA ligase (551 aa).

A 'HIGH' region motif is present at residues 125-135; that stretch reads ANPTGPLHIGH.

This sequence belongs to the class-I aminoacyl-tRNA synthetase family. Monomer.

It localises to the cytoplasm. It carries out the reaction tRNA(Arg) + L-arginine + ATP = L-arginyl-tRNA(Arg) + AMP + diphosphate. This chain is Arginine--tRNA ligase, found in Nitratidesulfovibrio vulgaris (strain DSM 19637 / Miyazaki F) (Desulfovibrio vulgaris).